The primary structure comprises 70 residues: Large ribosomal subunit protein eL38 (70 aa).

This sequence belongs to the eukaryotic ribosomal protein eL38 family.

This Caenorhabditis elegans protein is Large ribosomal subunit protein eL38 (rpl-38).